The primary structure comprises 523 residues: GMP synthase [glutamine-hydrolyzing] (523 aa).

In terms of domain architecture, Glutamine amidotransferase type-1 spans Pro9–Asn198. The active-site Nucleophile is Cys86. Residues His172 and Glu174 contribute to the active site. The 199-residue stretch at Trp199–Arg397 folds into the GMPS ATP-PPase domain. Ser227–Ala233 is an ATP binding site.

Homodimer.

It carries out the reaction XMP + L-glutamine + ATP + H2O = GMP + L-glutamate + AMP + diphosphate + 2 H(+). The protein operates within purine metabolism; GMP biosynthesis; GMP from XMP (L-Gln route): step 1/1. In terms of biological role, catalyzes the synthesis of GMP from XMP. This Corynebacterium efficiens (strain DSM 44549 / YS-314 / AJ 12310 / JCM 11189 / NBRC 100395) protein is GMP synthase [glutamine-hydrolyzing].